Here is a 348-residue protein sequence, read N- to C-terminus: L-threonine 3-dehydrogenase (348 aa).

Zn(2+) is bound at residue cysteine 42. Active-site charge relay system residues include threonine 44 and histidine 47. Zn(2+)-binding residues include histidine 67, glutamate 68, cysteine 97, cysteine 100, cysteine 103, and cysteine 111. Residues leucine 179, glutamate 199, arginine 204, 266-268 (LGL), and 291-292 (IT) each bind NAD(+).

This sequence belongs to the zinc-containing alcohol dehydrogenase family. In terms of assembly, homotetramer. The cofactor is Zn(2+).

Its subcellular location is the cytoplasm. The catalysed reaction is L-threonine + NAD(+) = (2S)-2-amino-3-oxobutanoate + NADH + H(+). It participates in amino-acid degradation; L-threonine degradation via oxydo-reductase pathway; glycine from L-threonine: step 1/2. In terms of biological role, catalyzes the NAD(+)-dependent oxidation of L-threonine to 2-amino-3-ketobutyrate. This chain is L-threonine 3-dehydrogenase, found in Pyrococcus abyssi (strain GE5 / Orsay).